The sequence spans 184 residues: Cytidylate kinase (184 aa).

Position 8 to 16 (8 to 16) interacts with ATP; sequence GQPGSGKTT.

It belongs to the cytidylate kinase family. Type 2 subfamily.

It is found in the cytoplasm. The catalysed reaction is CMP + ATP = CDP + ADP. The enzyme catalyses dCMP + ATP = dCDP + ADP. The polypeptide is Cytidylate kinase (Pyrobaculum neutrophilum (strain DSM 2338 / JCM 9278 / NBRC 100436 / V24Sta) (Thermoproteus neutrophilus)).